A 394-amino-acid chain; its full sequence is Enoyl-CoA delta isomerase 2 (394 aa).

Residues 1–38 (MAMAYLAWRLARRSCPSSLQVTSFPVVQLHMNRTAMRA) constitute a mitochondrion transit peptide. Residues 39–124 (SQKDFENSMN…VSSLSPSLES (86 aa)) enclose the ACB domain. The residue at position 51 (Lys-51) is an N6-acetyllysine; alternate. Lys-51 carries the post-translational modification N6-succinyllysine; alternate. Position 55 is an N6-succinyllysine (Lys-55). Lys-62 is modified (N6-acetyllysine; alternate). At Lys-62 the chain carries N6-succinyllysine; alternate. 66 to 70 (YALYK) contacts an acyl-CoA. N6-succinyllysine occurs at positions 70, 81, and 90. The residue at position 92 (Lys-92) is an N6-acetyllysine; alternate. Position 92 is an N6-succinyllysine; alternate (Lys-92). Lys-92 contributes to the an acyl-CoA binding site. Ser-101 bears the Phosphoserine mark. Tyr-111 provides a ligand contact to an acyl-CoA. At Ser-119 the chain carries Phosphoserine. Residues 151 to 322 (TKIMFNRPKK…AQGLVTEVFP (172 aa)) form an ECH-like region. Lys-161 carries the post-translational modification N6-succinyllysine. 198–202 (SGNDL) serves as a coordination point for substrate. An N6-succinyllysine modification is found at Lys-289. A Microbody targeting signal motif is present at residues 392–394 (SKL).

In the C-terminal section; belongs to the enoyl-CoA hydratase/isomerase family. Abundant in heart, skeletal muscle and liver. Expressed in CD34(+) T-cells and CD34(+) bone marrow cells.

Its subcellular location is the mitochondrion. The protein localises to the peroxisome matrix. The catalysed reaction is a (3Z)-enoyl-CoA = a 4-saturated (2E)-enoyl-CoA. The enzyme catalyses (3Z)-octenoyl-CoA = (2E)-octenoyl-CoA. It catalyses the reaction a (3E)-enoyl-CoA = a 4-saturated (2E)-enoyl-CoA. It carries out the reaction (2E)-tetradecenoyl-CoA = (3Z)-tetradecenoyl-CoA. The catalysed reaction is (3E)-tetradecenoyl-CoA = (2E)-tetradecenoyl-CoA. The enzyme catalyses (3E)-octenoyl-CoA = (2E)-octenoyl-CoA. It catalyses the reaction (3E)-nonenoyl-CoA = (2E)-nonenoyl-CoA. It functions in the pathway lipid metabolism; fatty acid beta-oxidation. Functionally, able to isomerize both 3-cis and 3-trans double bonds into the 2-trans form in a range of enoyl-CoA species. Has a preference for 3-trans substrates. The sequence is that of Enoyl-CoA delta isomerase 2 (ECI2) from Homo sapiens (Human).